A 298-amino-acid polypeptide reads, in one-letter code: uncharacterized protein (298 aa).

The HTH lysR-type domain maps to 1 to 61; sequence MDIFISKKMR…TRKDNNISLN (61 aa). Residues 21–40 constitute a DNA-binding region (H-T-H motif); the sequence is IARAAEKIHMTASPFGKSIA.

This sequence belongs to the LysR transcriptional regulatory family.

This is an uncharacterized protein from Escherichia coli (strain K12).